The primary structure comprises 127 residues: DNA-directed RNA polymerase subunit omega (127 aa).

The protein belongs to the RNA polymerase subunit omega family. As to quaternary structure, the RNAP catalytic core consists of 2 alpha, 1 beta, 1 beta' and 1 omega subunit. When a sigma factor is associated with the core the holoenzyme is formed, which can initiate transcription.

It carries out the reaction RNA(n) + a ribonucleoside 5'-triphosphate = RNA(n+1) + diphosphate. Functionally, promotes RNA polymerase assembly. Latches the N- and C-terminal regions of the beta' subunit thereby facilitating its interaction with the beta and alpha subunits. The sequence is that of DNA-directed RNA polymerase subunit omega from Rickettsia africae (strain ESF-5).